The chain runs to 243 residues: Nuclear ubiquitous casein and cyclin-dependent kinase substrate 1 (243 aa).

A disordered region spans residues 1 to 243 (MSRPVRNRKV…SEDDAQSGED (243 aa)). Tyr-13 bears the Phosphotyrosine mark. A phosphoserine mark is found at Ser-14 and Ser-19. Tyr-26 is subject to Phosphotyrosine. A compositionally biased stretch (basic residues) spans 35–51 (KKIRSSPREAKNKRRSG). Phosphoserine is present on residues Ser-54, Ser-58, Ser-61, Ser-73, Ser-75, and Ser-79. Residues 64 to 77 (KDVKTKKDDSHSAE) are compositionally biased toward basic and acidic residues. The segment covering 91-100 (QQRQAASKAA) has biased composition (low complexity). Positions 111 to 124 (VGSEEEQEEEDEAP) are enriched in acidic residues. Phosphoserine is present on residues Ser-113, Ser-130, Ser-132, and Ser-144. Residues 132–145 (SDEDFLVEDDDDSD) are compositionally biased toward acidic residues. A compositionally biased stretch (basic residues) spans 149-174 (SKKKNKKMVKKSKPERKEKKMPKPRL). Residue Thr-179 is modified to Phosphothreonine. Ser-181 bears the Phosphoserine mark. Positions 197 to 206 (ASKEKTPSPK) are enriched in basic and acidic residues. Thr-202 is modified (phosphothreonine). 6 positions are modified to phosphoserine: Ser-204, Ser-214, Ser-223, Ser-229, Ser-234, and Ser-240. Residues 232-243 (EGSEDDAQSGED) are compositionally biased toward acidic residues.

In terms of assembly, does not interact with RAD51. Phosphorylated in an ATM-dependent manner in response to DNA damage. Phosphorylated by CDK1 and casein kinase.

It is found in the nucleus. It localises to the chromosome. Chromatin-associated protein involved in DNA repair by promoting homologous recombination (HR). Binds double-stranded DNA (dsDNA) and secondary DNA structures, such as D-loop structures, but with less affinity than RAD51AP1. This is Nuclear ubiquitous casein and cyclin-dependent kinase substrate 1 (NUCKS1) from Bos taurus (Bovine).